The primary structure comprises 403 residues: Tyrosine--tRNA ligase (403 aa).

The 'HIGH' region signature appears at 42 to 51 (PTAPDLHLGH). Residues 226-230 (KMSKS) carry the 'KMSKS' region motif. Residue K229 coordinates ATP. Residues 339–400 (LRLAGLLTAA…GKRNFARVSL (62 aa)) enclose the S4 RNA-binding domain.

The protein belongs to the class-I aminoacyl-tRNA synthetase family. TyrS type 2 subfamily. Homodimer.

It is found in the cytoplasm. It carries out the reaction tRNA(Tyr) + L-tyrosine + ATP = L-tyrosyl-tRNA(Tyr) + AMP + diphosphate + H(+). In terms of biological role, catalyzes the attachment of tyrosine to tRNA(Tyr) in a two-step reaction: tyrosine is first activated by ATP to form Tyr-AMP and then transferred to the acceptor end of tRNA(Tyr). The polypeptide is Tyrosine--tRNA ligase (Xanthomonas axonopodis pv. citri (strain 306)).